We begin with the raw amino-acid sequence, 561 residues long: MSDNRRSRMITEGPQRSPNRAMLRAVGFGDNDFTKPIVGVANGHSTLTPCNAGLGALAARAEEAIRAAGGMPQIFGTITVSDGISMGTEGMKYSLVSREVIADSIETVVNAQRMDGILAVGGCDKNMPGALIAMARLDIPAIFVYGGTIKPGHYKGRDLTIVSAFEAVGEYSAGRIDEHELLEIERHACPGAGSCGGMYTANTMSSAIEALGLSLPGSSTMAAEDEEKALSAARSGEVLVEAIRANRTARQMLTRKSLENAIAVVMALGGSTNAVLHLLAIAHAADVPLTIDDFETIRQRVPVLCDLKPSGRYVATDLHRVGGVPQVMKILLNAGLLHGDCMTITGQTIAETLADVPDEPPANQDVIRPFSQPIYPQGHLAILRGNLAEEGCVAKITGIKQRRITGPARVFDAEEECLEAILSGKIKAGDVVVIRYEGPKGGPGMREMLAPTSAIIGAGLGDSVGLITDGRFSGGTYGLVVGHVAPEAAVGGTIALVEEGDSITIDADARLLQLNVSDEELARRRAAWQPRPPRYTRGVLAKYARLVSSASLGAVTDRFSE.

Position 50 (Cys50) interacts with [2Fe-2S] cluster. Asp82 lines the Mg(2+) pocket. Residue Cys123 coordinates [2Fe-2S] cluster. Residues Asp124 and Lys125 each contribute to the Mg(2+) site. Lys125 bears the N6-carboxylysine mark. A [2Fe-2S] cluster-binding site is contributed by Cys195. Mg(2+) is bound at residue Glu447. The active-site Proton acceptor is the Ser473.

This sequence belongs to the IlvD/Edd family. Homodimer. [2Fe-2S] cluster serves as cofactor. Mg(2+) is required as a cofactor.

The catalysed reaction is (2R)-2,3-dihydroxy-3-methylbutanoate = 3-methyl-2-oxobutanoate + H2O. The enzyme catalyses (2R,3R)-2,3-dihydroxy-3-methylpentanoate = (S)-3-methyl-2-oxopentanoate + H2O. It functions in the pathway amino-acid biosynthesis; L-isoleucine biosynthesis; L-isoleucine from 2-oxobutanoate: step 3/4. It participates in amino-acid biosynthesis; L-valine biosynthesis; L-valine from pyruvate: step 3/4. Functionally, functions in the biosynthesis of branched-chain amino acids. Catalyzes the dehydration of (2R,3R)-2,3-dihydroxy-3-methylpentanoate (2,3-dihydroxy-3-methylvalerate) into 2-oxo-3-methylpentanoate (2-oxo-3-methylvalerate) and of (2R)-2,3-dihydroxy-3-methylbutanoate (2,3-dihydroxyisovalerate) into 2-oxo-3-methylbutanoate (2-oxoisovalerate), the penultimate precursor to L-isoleucine and L-valine, respectively. This Chloroflexus aurantiacus (strain ATCC 29366 / DSM 635 / J-10-fl) protein is Dihydroxy-acid dehydratase.